The primary structure comprises 330 residues: BTB/POZ domain-containing adapter for CUL3-mediated RhoA degradation protein 1 (330 aa).

Positions Met1–Arg34 are disordered. The region spanning Lys40–Asp108 is the BTB domain. Positions Gly282–Gln291 are enriched in low complexity. The interval Gly282–Arg304 is disordered.

Belongs to the BACURD family.

Its subcellular location is the nucleus. In terms of biological role, substrate-specific adapter of a BCR (BTB-CUL3-RBX1) E3 ubiquitin-protein ligase complex required for synaptic transmission. The BCR(KCTD13) E3 ubiquitin ligase complex mediates the ubiquitination of RHOA, leading to its degradation by the proteasome, thereby regulating the actin cytoskeleton and promoting synaptic transmission. This chain is BTB/POZ domain-containing adapter for CUL3-mediated RhoA degradation protein 1, found in Danio rerio (Zebrafish).